The sequence spans 151 residues: Large ribosomal subunit protein bL9 (151 aa).

Belongs to the bacterial ribosomal protein bL9 family.

In terms of biological role, binds to the 23S rRNA. This Lacticaseibacillus casei (strain BL23) (Lactobacillus casei) protein is Large ribosomal subunit protein bL9.